An 879-amino-acid chain; its full sequence is Aminopeptidase M1 (879 aa).

The required for membrane association stretch occupies residues 98 to 205; sequence HGVGVLKLGF…MSTYLVAIVV (108 aa). Residues E138 and 271–275 each bind substrate; that span reads GAMEN. Zn(2+) is bound at residue H307. The Proton acceptor role is filled by E308. The Zn(2+) site is built by H311 and E330. A Dileucine internalization motif motif is present at residues 728-729; that stretch reads LL.

The protein belongs to the peptidase M1 family. Homodimer. Interacts with N-1-naphthylphthalamic acid (NPA). Requires Zn(2+) as cofactor. In terms of tissue distribution, ubiquitous with preferential expression in 5 days-old seedlings, roots, young flowers, upper inflorescence stems, and rosette leaves.

The protein resides in the membrane. The protein localises to the microsome membrane. It localises to the cytoplasm. The catalysed reaction is Release of an N-terminal amino acid, Xaa-|-Yaa- from a peptide, amide or arylamide. Xaa is preferably Ala, but may be most amino acids including Pro (slow action). When a terminal hydrophobic residue is followed by a prolyl residue, the two may be released as an intact Xaa-Pro dipeptide.. In terms of biological role, metallopeptidase that binds to the auxin transport inhibitor N-1-naphthylphthalamic acid (NPA). Required for embryonic and seedling development as well as cell cycle progression. Homodimerization is required to proper localization and activity. May play a negative role in the regulation of PIN auxin transport proteins. In Arabidopsis thaliana (Mouse-ear cress), this protein is Aminopeptidase M1 (APM1).